The primary structure comprises 622 residues: Polyamine transporter 3 (622 aa).

Positions 1-47 (MNRQESINSFNSDETSSLSDVESQQPQQYIPSESGSKSNMAPNQLKL) are enriched in polar residues. The tract at residues 1-76 (MNRQESINSF…VPDVNAPQSS (76 aa)) is disordered. Residues 1–182 (MNRQESINSF…WPAWIRWSYT (182 aa)) lie on the Cytoplasmic side of the membrane. Serine 55 carries the post-translational modification Phosphoserine. Residue threonine 98 is modified to Phosphothreonine. Phosphoserine occurs at positions 101 and 132. The segment at 105-152 (TSTAISRTRTRQIDGASSPSSNEDALESDNNEKGKEGDSSGANDEAPD) is disordered. The helical transmembrane segment at 183–203 (VLLSILVICVAYGSACISGGL) threads the bilayer. Topologically, residues 204–215 (GTVEKKYHVGME) are extracellular. A helical transmembrane segment spans residues 216–236 (AAILSVSLMVIGFSLGPLIWS). The Cytoplasmic portion of the chain corresponds to 237 to 245 (PVSDLYGRR). The helical transmembrane segment at 246–266 (VAYFVSMGLYVIFNIPCALAP) threads the bilayer. Topologically, residues 267-275 (NLGSLLACR) are extracellular. The chain crosses the membrane as a helical span at residues 276–296 (FLCGVWSSSGLCLVGGSIADM). Over 297 to 305 (FPSETRGKA) the chain is Cytoplasmic. A helical membrane pass occupies residues 306 to 326 (IAFFAFAPYVGPVVGPLVNGF). Over 327 to 335 (ISVSTGRMD) the chain is Extracellular. Residues 336–356 (LIFWVNMAFAGVMWIISSAIP) form a helical membrane-spanning segment. The Cytoplasmic portion of the chain corresponds to 357–416 (ETYAPVILKRKAARLRKETGNPKIMTEQEAQGVSMGEMMRACLLRPLYFSVTEPVLVATC). A helical membrane pass occupies residues 417-437 (FYVCLIYSLLYAFFFAFPVIF). Residues 438 to 446 (GELYGYKDN) lie on the Extracellular side of the membrane. The chain crosses the membrane as a helical span at residues 447-467 (LVGLMFIPIVIGALWALATTF). The Cytoplasmic segment spans residues 468-487 (YCENKYLQIVKQRKPTPEDR). A helical transmembrane segment spans residues 488-508 (LLGAKIGAPFAAIALWILGAT). Residues 509-512 (AYKH) lie on the Extracellular side of the membrane. A helical transmembrane segment spans residues 513-533 (IIWVGPASAGLAFGFGMVLIY). The Cytoplasmic segment spans residues 534-550 (YSLNNYIIDCYVQYASS). The helical transmembrane segment at 551 to 571 (ALATKVFLRSAGGAAFPLFTI) threads the bilayer. The Extracellular portion of the chain corresponds to 572-583 (QMYHKLNLHWGS). A helical membrane pass occupies residues 584-604 (WLLAFISTAMIALPFAFSYWG). Residues 605-622 (KGLRHKLSKKDYSIDSIE) lie on the Cytoplasmic side of the membrane.

This sequence belongs to the major facilitator superfamily. DHA1 family. Polyamines/proton antiporter (TC 2.A.1.2.16) subfamily.

The protein localises to the cell membrane. Its function is as follows. Cell membrane polyamine/proton antiporter, involved in the detoxification of excess polyamines in the cytoplasm. Recognizes spermine, but not spermidine. In Saccharomyces cerevisiae (strain ATCC 204508 / S288c) (Baker's yeast), this protein is Polyamine transporter 3 (TPO3).